Here is a 226-residue protein sequence, read N- to C-terminus: Protein transport protein sec20 (226 aa).

At 1–189 the chain is on the cytoplasmic side; sequence MADVLNALEE…IKSLKLSDRS (189 aa). Residues 53 to 75 are a coiled coil; sequence LRYEKAVQEYIRLNRRYRNKIAS. S97 carries the post-translational modification Phosphoserine. A helical; Anchor for type IV membrane protein transmembrane segment spans residues 190-210; the sequence is DYFLVVSGFGFFIFVVVYLLF. The Lumenal portion of the chain corresponds to 211–226; that stretch reads KRIVWPILSMFLWFLR.

This sequence belongs to the SEC20 family. Component of a SNARE complex consisting of ufe1, sec20, sec22 and use1. Interacts with tip20 through its cytoplasmic domain.

It is found in the endoplasmic reticulum membrane. Its function is as follows. SNARE required for targeting and fusion of Golgi-derived retrograde transport vesicles with the ER. This is Protein transport protein sec20 from Schizosaccharomyces pombe (strain 972 / ATCC 24843) (Fission yeast).